The primary structure comprises 193 residues: Urease accessory protein UreE (193 aa).

Residues 138-193 form a disordered region; it reads RGAYHSHGAHSHDQGHAAHDHGNEHKHDHGHDHVHGPGCDHDHDHDHGHHHDHKHD. Positions 147 to 193 are enriched in basic and acidic residues; it reads HSHDQGHAAHDHGNEHKHDHGHDHVHGPGCDHDHDHDHGHHHDHKHD.

It belongs to the UreE family.

It localises to the cytoplasm. Involved in urease metallocenter assembly. Binds nickel. Probably functions as a nickel donor during metallocenter assembly. The chain is Urease accessory protein UreE from Rhizobium leguminosarum bv. trifolii (strain WSM2304).